The following is a 421-amino-acid chain: Serine--tRNA ligase (421 aa).

231–233 (TAE) is a binding site for L-serine. 262 to 264 (RRE) contributes to the ATP binding site. Residue Glu285 coordinates L-serine. Residue 349 to 352 (EISS) coordinates ATP. L-serine is bound at residue Ser384.

Belongs to the class-II aminoacyl-tRNA synthetase family. Type-1 seryl-tRNA synthetase subfamily. In terms of assembly, homodimer. The tRNA molecule binds across the dimer.

It localises to the cytoplasm. The catalysed reaction is tRNA(Ser) + L-serine + ATP = L-seryl-tRNA(Ser) + AMP + diphosphate + H(+). It catalyses the reaction tRNA(Sec) + L-serine + ATP = L-seryl-tRNA(Sec) + AMP + diphosphate + H(+). Its pathway is aminoacyl-tRNA biosynthesis; selenocysteinyl-tRNA(Sec) biosynthesis; L-seryl-tRNA(Sec) from L-serine and tRNA(Sec): step 1/1. Catalyzes the attachment of serine to tRNA(Ser). Is also able to aminoacylate tRNA(Sec) with serine, to form the misacylated tRNA L-seryl-tRNA(Sec), which will be further converted into selenocysteinyl-tRNA(Sec). The polypeptide is Serine--tRNA ligase (Hydrogenobaculum sp. (strain Y04AAS1)).